The primary structure comprises 124 residues: Small ribosomal subunit protein uS12c (124 aa).

The protein belongs to the universal ribosomal protein uS12 family. In terms of assembly, part of the 30S ribosomal subunit.

The protein localises to the plastid. With S4 and S5 plays an important role in translational accuracy. Located at the interface of the 30S and 50S subunits. The polypeptide is Small ribosomal subunit protein uS12c (rps12) (Helicosporidium sp. subsp. Simulium jonesii (Green alga)).